A 66-amino-acid polypeptide reads, in one-letter code: DNA gyrase inhibitor YacG (66 aa).

Positions 9, 12, 28, and 32 each coordinate Zn(2+).

This sequence belongs to the DNA gyrase inhibitor YacG family. As to quaternary structure, interacts with GyrB. Requires Zn(2+) as cofactor.

Functionally, inhibits all the catalytic activities of DNA gyrase by preventing its interaction with DNA. Acts by binding directly to the C-terminal domain of GyrB, which probably disrupts DNA binding by the gyrase. This Pseudomonas fluorescens (strain SBW25) protein is DNA gyrase inhibitor YacG.